Reading from the N-terminus, the 611-residue chain is MPKLRSATSTQGRNMAGARALWRATGMKENDFGKPIIAVVNSFTQFVPGHVHLKDMGQLVATEIEKFGGVAKEFNTIAVDDGIAMGHGGMLYSLPSRDLIADSVEYMVNAHCADAMVCISNCDKITPGMLMAALRLNIPTVFVSGGPMEAGKTKLSDQIIKLDLVDAMIQGANPNVSDDVSEQIERSACPTCGSCSGMFTANSMNCLTEALGLSLPGNGSCLATHADRKQLFLAAGKQIVELCKRYYEQDDTSVLPRSIATKEAFDNAMSLDIAMGGSTNTVLHLLAAAQEAEVNFTMADIDRLSRVVPCLSKVAPNTQKYHMEDVHRAGGIMAILGELDRAGLLNSQTRTILGMSIGEQIAKYDIKLTQDKAIHKFFRAGPAGIRTTQAFLQDCRWDTVDDDRENGCIRSKEFAYSQDGGLAMLSGNIALDGCIVKTAGVDESILKFSGKAIVFESQEDAVSGILGGKVQAGHVVVIRYEGPKGGPGMQEMLYPTSYLKSMGLGKACALLTDGRFSGGTSGLSIGHCSPEAAAGGLIGVVKDGDIIEIDIPNRRIELMVSEEELAERRAEQDKLGWKPANRQREVSFALKVYGYFATSADKGAVRDKTKI.

Asp-81 provides a ligand contact to Mg(2+). Position 122 (Cys-122) interacts with [2Fe-2S] cluster. Positions 123 and 124 each coordinate Mg(2+). The residue at position 124 (Lys-124) is an N6-carboxylysine. Cys-195 is a binding site for [2Fe-2S] cluster. Glu-491 contributes to the Mg(2+) binding site. The active-site Proton acceptor is Ser-517.

It belongs to the IlvD/Edd family. Homodimer. [2Fe-2S] cluster serves as cofactor. The cofactor is Mg(2+).

The enzyme catalyses (2R)-2,3-dihydroxy-3-methylbutanoate = 3-methyl-2-oxobutanoate + H2O. It catalyses the reaction (2R,3R)-2,3-dihydroxy-3-methylpentanoate = (S)-3-methyl-2-oxopentanoate + H2O. The protein operates within amino-acid biosynthesis; L-isoleucine biosynthesis; L-isoleucine from 2-oxobutanoate: step 3/4. Its pathway is amino-acid biosynthesis; L-valine biosynthesis; L-valine from pyruvate: step 3/4. Functions in the biosynthesis of branched-chain amino acids. Catalyzes the dehydration of (2R,3R)-2,3-dihydroxy-3-methylpentanoate (2,3-dihydroxy-3-methylvalerate) into 2-oxo-3-methylpentanoate (2-oxo-3-methylvalerate) and of (2R)-2,3-dihydroxy-3-methylbutanoate (2,3-dihydroxyisovalerate) into 2-oxo-3-methylbutanoate (2-oxoisovalerate), the penultimate precursor to L-isoleucine and L-valine, respectively. This Histophilus somni (strain 129Pt) (Haemophilus somnus) protein is Dihydroxy-acid dehydratase.